The sequence spans 102 residues: MNPNQKIITIGSVSLGLVCLDILLHIISITITVLGLHKNGKQRRCNETVIREDNETVRIEKVTQWHNTNVIEYIEKLEGDHFMNNTEPLCHAKGFALFSKDN.

Residues 1–6 are Intravirion-facing; sequence MNPNQK. A helical; Signal-anchor for type II membrane protein transmembrane segment spans residues 7-35; it reads IITIGSVSLGLVCLDILLHIISITITVLG. Positions 11–33 are involved in apical transport and lipid raft association; that stretch reads GSVSLGLVCLDILLHIISITITV. Topologically, residues 36–102 are virion surface; it reads LHKNGKQRRC…KGFALFSKDN (67 aa). The interval 37 to 88 is hypervariable stalk region; it reads HKNGKQRRCNETVIREDNETVRIEKVTQWHNTNVIEYIEKLEGDHFMNNTEP. N-linked (GlcNAc...) asparagine; by host glycans are attached at residues asparagine 46, asparagine 54, and asparagine 84. Positions 89–102 are head of neuraminidase; that stretch reads LCHAKGFALFSKDN.

Belongs to the glycosyl hydrolase 34 family. Homotetramer. Requires Ca(2+) as cofactor. Post-translationally, N-glycosylated.

The protein localises to the virion membrane. It is found in the host apical cell membrane. The enzyme catalyses Hydrolysis of alpha-(2-&gt;3)-, alpha-(2-&gt;6)-, alpha-(2-&gt;8)- glycosidic linkages of terminal sialic acid residues in oligosaccharides, glycoproteins, glycolipids, colominic acid and synthetic substrates.. Inhibited by the neuraminidase inhibitors zanamivir (Relenza) and oseltamivir (Tamiflu). These drugs interfere with the release of progeny virus from infected cells and are effective against all influenza strains. Resistance to neuraminidase inhibitors is quite rare. In terms of biological role, catalyzes the removal of terminal sialic acid residues from viral and cellular glycoconjugates. Cleaves off the terminal sialic acids on the glycosylated HA during virus budding to facilitate virus release. Additionally helps virus spread through the circulation by further removing sialic acids from the cell surface. These cleavages prevent self-aggregation and ensure the efficient spread of the progeny virus from cell to cell. Otherwise, infection would be limited to one round of replication. Described as a receptor-destroying enzyme because it cleaves a terminal sialic acid from the cellular receptors. May facilitate viral invasion of the upper airways by cleaving the sialic acid moieties on the mucin of the airway epithelial cells. Likely to plays a role in the budding process through its association with lipid rafts during intracellular transport. May additionally display a raft-association independent effect on budding. Plays a role in the determination of host range restriction on replication and virulence. Sialidase activity in late endosome/lysosome traffic seems to enhance virus replication. The sequence is that of Neuraminidase (NA) from Influenza A virus (strain A/Black duck/Australia/702/1978 H3N8).